The sequence spans 179 residues: Large ribosomal subunit protein uL5 (179 aa).

This sequence belongs to the universal ribosomal protein uL5 family. As to quaternary structure, part of the 50S ribosomal subunit; part of the 5S rRNA/L5/L18/L25 subcomplex. Contacts the 5S rRNA and the P site tRNA. Forms a bridge to the 30S subunit in the 70S ribosome.

This is one of the proteins that bind and probably mediate the attachment of the 5S RNA into the large ribosomal subunit, where it forms part of the central protuberance. In the 70S ribosome it contacts protein S13 of the 30S subunit (bridge B1b), connecting the 2 subunits; this bridge is implicated in subunit movement. Contacts the P site tRNA; the 5S rRNA and some of its associated proteins might help stabilize positioning of ribosome-bound tRNAs. The sequence is that of Large ribosomal subunit protein uL5 from Solidesulfovibrio magneticus (strain ATCC 700980 / DSM 13731 / RS-1) (Desulfovibrio magneticus).